A 249-amino-acid chain; its full sequence is Proteasome activator complex subunit 1 (249 aa).

The interval 55-102 is disordered; it reads SNLKAPLDIPVPDPVKEKEKEERRKQQEKEDKDEKKKGEDEDKGPPCG. A compositionally biased stretch (basic and acidic residues) spans 68–98; sequence PVKEKEKEERRKQQEKEDKDEKKKGEDEDKG.

Belongs to the PA28 family. As to quaternary structure, heterodimer of PSME1 and PSME2, which forms a hexameric ring. PSME1 can form homoheptamers.

Its function is as follows. Implicated in immunoproteasome assembly and required for efficient antigen processing. The PA28 activator complex enhances the generation of class I binding peptides by altering the cleavage pattern of the proteasome. The protein is Proteasome activator complex subunit 1 (PSME1) of Bos taurus (Bovine).